The sequence spans 320 residues: Probable L,D-transpeptidase YcfS (320 aa).

The signal sequence occupies residues 1-23 (MMIKTRFSRWLTFFTFAAAVALA). One can recognise a LysM domain in the interval 45-90 (KFHVVENDGGSLEAIAKKYNVGFLALLQANPGVDPYVPRAGSVLTI). The 140-residue stretch at 102–241 (EGIVINIAEL…VTPGTKVNII (140 aa)) folds into the L,D-TPase catalytic domain. The active-site Proton donor/acceptor is the His201. Catalysis depends on Cys217, which acts as the Nucleophile.

The protein belongs to the YkuD family. As to quaternary structure, interacts with DsbG.

It is found in the periplasm. It participates in cell wall biogenesis; peptidoglycan biosynthesis. Functionally, responsible, at least in part, for anchoring of the major outer membrane lipoprotein (Lpp, also known as the Braun lipoprotein) to the peptidoglycan via a meso-diaminopimelyl-L-Lys- bond on the terminal residue of Lpp. The protein is Probable L,D-transpeptidase YcfS (ycfS) of Escherichia coli (strain K12).